A 370-amino-acid polypeptide reads, in one-letter code: Protein-tyrosine sulfotransferase 1 (370 aa).

Topologically, residues 1–8 are cytoplasmic; sequence MVGKLKQN. A helical; Signal-anchor for type II membrane protein membrane pass occupies residues 9–25; it reads LLLACLVISSVTVFYLG. Residues 26-370 are Lumenal-facing; the sequence is QHAMECHHRI…KEKPQTEQVE (345 aa). A glycan (N-linked (GlcNAc...) asparagine) is linked at asparagine 60. 79-83 provides a ligand contact to 3'-phosphoadenylyl sulfate; it reads RSGTT. A disulfide bridge connects residues cysteine 97 and cysteine 157. Catalysis depends on glutamate 100, which acts as the Proton donor/acceptor. The interval 102-106 is interaction with peptide substrate; sequence RVIPR. 3'-phosphoadenylyl sulfate-binding residues include arginine 184, serine 192, and arginine 196. Cysteine 226 and cysteine 234 form a disulfide bridge. Tyrosine 239 lines the 3'-phosphoadenylyl sulfate pocket. N-linked (GlcNAc...) asparagine glycosylation occurs at asparagine 262. 3'-phosphoadenylyl sulfate is bound by residues 286-295 and lysine 301; that span reads STDQVIKPVN.

Belongs to the protein sulfotransferase family. Homodimer. Can also form heterodimers with TPST2. In terms of processing, N-glycosylated.

It is found in the golgi apparatus membrane. The enzyme catalyses L-tyrosyl-[protein] + 3'-phosphoadenylyl sulfate = O-sulfo-L-tyrosine-[protein] + adenosine 3',5'-bisphosphate + H(+). Its function is as follows. Catalyzes the O-sulfation of tyrosine residues within acidic motifs of polypeptides, using 3'-phosphoadenylyl sulfate (PAPS) as cosubstrate. The protein is Protein-tyrosine sulfotransferase 1 (Tpst1) of Rattus norvegicus (Rat).